The following is a 178-amino-acid chain: Large ribosomal subunit protein uL10 (178 aa).

The protein belongs to the universal ribosomal protein uL10 family. Part of the ribosomal stalk of the 50S ribosomal subunit. The N-terminus interacts with L11 and the large rRNA to form the base of the stalk. The C-terminus forms an elongated spine to which L12 dimers bind in a sequential fashion forming a multimeric L10(L12)X complex.

Functionally, forms part of the ribosomal stalk, playing a central role in the interaction of the ribosome with GTP-bound translation factors. In Salinibacter ruber (strain DSM 13855 / M31), this protein is Large ribosomal subunit protein uL10.